The following is a 422-amino-acid chain: UPF0761 membrane protein XAC0937 (422 aa).

6 helical membrane-spanning segments follow: residues 45–65 (VFAL…FPAF), 102–122 (FTVA…HSIE), 151–171 (GTML…LPLF), 179–199 (LAEF…IVLI), 213–233 (ALPG…GFGF), and 247–267 (ALSA…SVLL).

This sequence belongs to the UPF0761 family.

Its subcellular location is the cell inner membrane. The sequence is that of UPF0761 membrane protein XAC0937 from Xanthomonas axonopodis pv. citri (strain 306).